The sequence spans 419 residues: Enolase (419 aa).

(2R)-2-phosphoglycerate is bound at residue glutamine 161. The active-site Proton donor is the glutamate 205. Mg(2+)-binding residues include aspartate 240, glutamate 283, and aspartate 309. The (2R)-2-phosphoglycerate site is built by lysine 334, arginine 363, serine 364, and lysine 385. Catalysis depends on lysine 334, which acts as the Proton acceptor.

The protein belongs to the enolase family. It depends on Mg(2+) as a cofactor.

It localises to the cytoplasm. The protein localises to the secreted. It is found in the cell surface. It carries out the reaction (2R)-2-phosphoglycerate = phosphoenolpyruvate + H2O. The protein operates within carbohydrate degradation; glycolysis; pyruvate from D-glyceraldehyde 3-phosphate: step 4/5. Its function is as follows. Catalyzes the reversible conversion of 2-phosphoglycerate (2-PG) into phosphoenolpyruvate (PEP). It is essential for the degradation of carbohydrates via glycolysis. This Saccharolobus islandicus (strain Y.G.57.14 / Yellowstone #1) (Sulfolobus islandicus) protein is Enolase.